The sequence spans 78 residues: DNA-directed RNA polymerase subunit omega (78 aa).

Belongs to the RNA polymerase subunit omega family. As to quaternary structure, in cyanobacteria the RNAP catalytic core is composed of 2 alpha, 1 beta, 1 beta', 1 gamma and 1 omega subunit. When a sigma factor is associated with the core the holoenzyme is formed, which can initiate transcription.

It carries out the reaction RNA(n) + a ribonucleoside 5'-triphosphate = RNA(n+1) + diphosphate. Functionally, promotes RNA polymerase assembly. Latches the N- and C-terminal regions of the beta' subunit thereby facilitating its interaction with the beta and alpha subunits. This is DNA-directed RNA polymerase subunit omega from Prochlorococcus marinus (strain MIT 9301).